The following is a 114-amino-acid chain: Non-specific lipid-transfer protein 1 (114 aa).

Residues M1–E23 form the signal peptide. 4 disulfides stabilise this stretch: C27–C73, C37–C50, C51–C96, and C71–C110.

This sequence belongs to the plant LTP family.

Its function is as follows. Plant non-specific lipid-transfer proteins transfer phospholipids as well as galactolipids across membranes. May play a role in wax or cutin deposition in the cell walls of expanding epidermal cells and certain secretory tissues. The sequence is that of Non-specific lipid-transfer protein 1 (TSW12) from Solanum lycopersicum (Tomato).